A 1562-amino-acid polypeptide reads, in one-letter code: Cell wall protein RBR3 (1562 aa).

The first 20 residues, 1-20 (MIIFRKSFFTFWLLLNSVLA), serve as a signal peptide directing secretion. N-linked (GlcNAc...) asparagine glycosylation is present at Asn-190. The segment covering 338-353 (APGTNPTEYTTTITTT) has biased composition (low complexity). Positions 338–366 (APGTNPTEYTTTITTTNSAGKPLTETGVV) are disordered. A glycan (N-linked (GlcNAc...) asparagine) is linked at Asn-373. Low complexity-rich tracts occupy residues 383–415 (FPTS…SQPS) and 422–729 (SSSK…ISAT). Disordered stretches follow at residues 383-729 (FPTS…ISAT), 1404-1424 (GSGS…SSSN), and 1455-1486 (YSSG…GNSN). Asn-602, Asn-679, and Asn-705 each carry an N-linked (GlcNAc...) asparagine glycan. A compositionally biased stretch (gly residues) spans 1407–1419 (SDSGSGSGSGSGS). Positions 1468–1486 (GANNVGSNQTPTVSGGNSN) are enriched in polar residues. Residue Asn-1538 is the site of GPI-anchor amidated asparagine attachment. Positions 1539–1562 (SGSKFSVGKSAFIAIILTTFIGFI) are cleaved as a propeptide — removed in mature form.

Belongs to the HYR1/IFF family. The GPI-anchor is attached to the protein in the endoplasmic reticulum and serves to target the protein to the cell surface. There, the glucosamine-inositol phospholipid moiety is cleaved off and the GPI-modified mannoprotein is covalently attached via its lipidless GPI glycan remnant to the 1,6-beta-glucan of the outer cell wall layer.

It is found in the secreted. The protein resides in the cell wall. The protein localises to the membrane. GPI-anchored cell wall protein involved in cell wall organization, hyphal growth, as well as in host-fungal interaction and virulence. This Candida albicans (strain SC5314 / ATCC MYA-2876) (Yeast) protein is Cell wall protein RBR3 (RBR3).